Here is a 243-residue protein sequence, read N- to C-terminus: Ubiquinone biosynthesis O-methyltransferase (243 aa).

The S-adenosyl-L-methionine site is built by arginine 45, glycine 65, aspartate 86, and leucine 130.

The protein belongs to the methyltransferase superfamily. UbiG/COQ3 family.

The enzyme catalyses a 3-demethylubiquinol + S-adenosyl-L-methionine = a ubiquinol + S-adenosyl-L-homocysteine + H(+). The catalysed reaction is a 3-(all-trans-polyprenyl)benzene-1,2-diol + S-adenosyl-L-methionine = a 2-methoxy-6-(all-trans-polyprenyl)phenol + S-adenosyl-L-homocysteine + H(+). Its pathway is cofactor biosynthesis; ubiquinone biosynthesis. In terms of biological role, O-methyltransferase that catalyzes the 2 O-methylation steps in the ubiquinone biosynthetic pathway. The chain is Ubiquinone biosynthesis O-methyltransferase from Idiomarina loihiensis (strain ATCC BAA-735 / DSM 15497 / L2-TR).